Reading from the N-terminus, the 146-residue chain is Glycosylation-dependent cell adhesion molecule 1 (146 aa).

A signal peptide spans 1–19 (MKFFTVLLFASLAATSLAA). The disordered stretch occupies residues 25–112 (DELHLRTQPT…SAATSEGKLT (88 aa)). Residues 48 to 60 (ISKESTSSKDLSK) show a composition bias toward basic and acidic residues. Serine 54, serine 59, and serine 71 each carry phosphoserine. The segment covering 74-106 (NVGTESTKPQSQEAQDGLRSGSSQQEETTSAAT) has biased composition (polar residues).

This sequence belongs to the PP3/GlyCAM-1 family. Post-translationally, extensively O-glycosylated. In terms of tissue distribution, lymph nodes. Associated with the lumenal surface of the high endothelial venules of peripheral lymph nodes.

The protein resides in the cell membrane. Functionally, adhesion molecule that accomplishes cell binding by presenting carbohydrate(s) to the lectin domain of L-selectin. This is Glycosylation-dependent cell adhesion molecule 1 (Glycam1) from Rattus norvegicus (Rat).